The chain runs to 462 residues: 7-hydroxymethyl chlorophyll a reductase, chloroplastic (462 aa).

The N-terminal 20 residues, 1 to 20, are a transit peptide targeting the chloroplast; that stretch reads MITVVTSRLSLLPPVFSVVN.

Belongs to the FrhB family. In terms of assembly, interacts with SGR1, the chlorophyll catabolic enzymes (CCEs) NYC1, NOL and RCCR, and the LHCII complex. Part of a SGR1-CCE-LHCII complex, which acts in chlorophyll breakdown. Requires FAD as cofactor. It depends on iron-sulfur cluster as a cofactor.

Its subcellular location is the plastid. It localises to the chloroplast. It carries out the reaction chlorophyll a + 2 oxidized [2Fe-2S]-[ferredoxin] + H2O = 7(1)-hydroxychlorophyll a + 2 reduced [2Fe-2S]-[ferredoxin] + 2 H(+). Functionally, probable iron-sulfur flavoprotein that converts 7-hydroxymethyl chlorophyll a to chlorophyll a using ferredoxin as a reducing equivalent. Catalyzes the reduction of a hydroxymethyl group to a methyl group. Belongs to the chlorophyll catabolic enzymes (CCEs). The protein is 7-hydroxymethyl chlorophyll a reductase, chloroplastic (HCAR) of Arabidopsis thaliana (Mouse-ear cress).